The primary structure comprises 141 residues: Acetyltransferase YpeA (141 aa).

One can recognise an N-acetyltransferase domain in the interval 1–141; the sequence is MEIRVFRQED…GKRLIEDEEY (141 aa).

Belongs to the acetyltransferase family. YpeA subfamily.

In Shigella boydii serotype 4 (strain Sb227), this protein is Acetyltransferase YpeA.